The following is a 277-amino-acid chain: Homeobox protein Nkx-6.2 (277 aa).

The repressor domain stretch occupies residues 89-142; that stretch reads AGVYFGPAAAVARGYPKPLAELPGRPPIFWPGVVQGAPWRDPRLAGPAPAGGVL. Disordered stretches follow at residues 132 to 155 and 210 to 250; these read LAGPAPAGGVLDKDGKKKHSRPTF and EMAS…DDEK. The segment at residues 148–207 is a DNA-binding region (homeobox); sequence KKHSRPTFSGQQIFALEKTFEQTKYLAGPERARLAYSLGMTESQVKVWFQNRRTKWRKRH. Residues 216–226 are compositionally biased toward basic and acidic residues; it reads KKQDSDAEKLK.

As to expression, highest expression in brain.

It localises to the nucleus. Its function is as follows. Transcription factor with repressor activity involved in the regulation of axon-glial interactions at myelin paranodes in oligodendrocytes. Binds to the consensus DNA sequence 5'-(A/T)TTAATGA-3'. In oligodendrocytes, binds to MBP and PLP1 promoter regions. This is Homeobox protein Nkx-6.2 (NKX6-2) from Homo sapiens (Human).